A 227-amino-acid chain; its full sequence is Large ribosomal subunit protein uL3 (227 aa).

Belongs to the universal ribosomal protein uL3 family. Part of the 50S ribosomal subunit. Forms a cluster with proteins L14 and L19.

Functionally, one of the primary rRNA binding proteins, it binds directly near the 3'-end of the 23S rRNA, where it nucleates assembly of the 50S subunit. This chain is Large ribosomal subunit protein uL3, found in Persephonella marina (strain DSM 14350 / EX-H1).